A 452-amino-acid polypeptide reads, in one-letter code: Diphthine methyltransferase (452 aa).

WD repeat units lie at residues 79 to 130 (PLVE…SHVL), 131 to 185 (EPLS…RPRL), 186 to 229 (QKVA…RVPG), 230 to 273 (KFLF…RNMK), 274 to 313 (QPLA…LNCQ), 314 to 403 (KAME…TEGM), and 404 to 448 (RKNG…HLWE). Ser353 is subject to Phosphoserine. Residues 371–402 (SELPTPCHECREDNDGEGHARPQSGMKPLTEG) form a disordered region. A compositionally biased stretch (basic and acidic residues) spans 378-390 (HECREDNDGEGHA).

This sequence belongs to the DPH7 family. In terms of assembly, interacts with INCA1.

The enzyme catalyses diphthine methyl ester-[translation elongation factor 2] + H2O = diphthine-[translation elongation factor 2] + methanol + H(+). It functions in the pathway protein modification; peptidyl-diphthamide biosynthesis. Catalyzes the demethylation of diphthine methyl ester to form diphthine, an intermediate diphthamide biosynthesis, a post-translational modification of histidine which occurs in translation elongation factor 2 (EEF2) which can be ADP-ribosylated by diphtheria toxin and by Pseudomonas exotoxin A (Eta). The sequence is that of Diphthine methyltransferase (DPH7) from Homo sapiens (Human).